We begin with the raw amino-acid sequence, 67 residues long: DNA-directed RNA polymerase subunit omega (67 aa).

This sequence belongs to the RNA polymerase subunit omega family. The RNAP catalytic core consists of 2 alpha, 1 beta, 1 beta' and 1 omega subunit. When a sigma factor is associated with the core the holoenzyme is formed, which can initiate transcription.

The catalysed reaction is RNA(n) + a ribonucleoside 5'-triphosphate = RNA(n+1) + diphosphate. Functionally, promotes RNA polymerase assembly. Latches the N- and C-terminal regions of the beta' subunit thereby facilitating its interaction with the beta and alpha subunits. This chain is DNA-directed RNA polymerase subunit omega, found in Burkholderia ambifaria (strain ATCC BAA-244 / DSM 16087 / CCUG 44356 / LMG 19182 / AMMD) (Burkholderia cepacia (strain AMMD)).